The following is a 116-amino-acid chain: MFDKKAARLRRAKKTRAHIRFLGVHRLTVNRTPRHIYAQIISPNGGEVIAQASTLDSSLRSGATGNADAATSVGQMIAERAKAAGITKVAFDRSGFKYHGRVKALAEAARENGLEF.

Belongs to the universal ribosomal protein uL18 family. In terms of assembly, part of the 50S ribosomal subunit; part of the 5S rRNA/L5/L18/L25 subcomplex. Contacts the 5S and 23S rRNAs.

This is one of the proteins that bind and probably mediate the attachment of the 5S RNA into the large ribosomal subunit, where it forms part of the central protuberance. This is Large ribosomal subunit protein uL18 from Psychrobacter arcticus (strain DSM 17307 / VKM B-2377 / 273-4).